The following is a 310-amino-acid chain: HPr kinase/phosphorylase 1 (310 aa).

Active-site residues include His-139 and Lys-160. 154 to 161 (GQSGVGKS) is a binding site for ATP. Ser-161 is a Mg(2+) binding site. Asp-178 functions as the Proton acceptor; for phosphorylation activity. Proton donor; for dephosphorylation activity in the catalytic mechanism. An important for the catalytic mechanism of both phosphorylation and dephosphorylation region spans residues 202-211 (LEIRGLGIIN). Glu-203 contributes to the Mg(2+) binding site. Arg-244 is an active-site residue. Residues 265-270 (PVRPGR) form an important for the catalytic mechanism of dephosphorylation region.

It belongs to the HPrK/P family. In terms of assembly, homohexamer. Requires Mg(2+) as cofactor.

It carries out the reaction [HPr protein]-L-serine + ATP = [HPr protein]-O-phospho-L-serine + ADP + H(+). The enzyme catalyses [HPr protein]-O-phospho-L-serine + phosphate + H(+) = [HPr protein]-L-serine + diphosphate. In terms of biological role, catalyzes the ATP- as well as the pyrophosphate-dependent phosphorylation of a specific serine residue in HPr, a phosphocarrier protein of the phosphoenolpyruvate-dependent sugar phosphotransferase system (PTS). HprK/P also catalyzes the pyrophosphate-producing, inorganic phosphate-dependent dephosphorylation (phosphorolysis) of seryl-phosphorylated HPr (P-Ser-HPr). The two antagonistic activities of HprK/P are regulated by several intracellular metabolites, which change their concentration in response to the absence or presence of rapidly metabolisable carbon sources (glucose, fructose, etc.) in the growth medium. Also phosphorylates/dephosphorylates the HPr-like catabolite repression protein crh on a specific serine residue. Therefore, by controlling the phosphorylation state of HPr and crh, HPrK/P is a sensor enzyme that plays a major role in the regulation of carbon metabolism and sugar transport: it mediates carbon catabolite repression (CCR), and regulates PTS-catalyzed carbohydrate uptake and inducer exclusion. The chain is HPr kinase/phosphorylase 1 (hprK1) from Oceanobacillus iheyensis (strain DSM 14371 / CIP 107618 / JCM 11309 / KCTC 3954 / HTE831).